We begin with the raw amino-acid sequence, 139 residues long: MRIMGLDVGDKTIGVAISDLSGTIAQGLTTIKRSSNKKDFERIKQIINEYEVGMIIVGLPKNMNGTLGPQGQKVMRFVEHLKEAFSIPIILWDERLTTVEAQRVLIEKADISRAKRKEVIDKLAAVLILQNYLDSQKNK.

This sequence belongs to the YqgF nuclease family.

It is found in the cytoplasm. Functionally, could be a nuclease involved in processing of the 5'-end of pre-16S rRNA. This chain is Putative pre-16S rRNA nuclease, found in Thermoanaerobacter pseudethanolicus (strain ATCC 33223 / 39E) (Clostridium thermohydrosulfuricum).